The sequence spans 921 residues: Translation initiation factor IF-2 (921 aa).

Positions 1–296 (MADQNTPGDK…PGPQKQRGRL (296 aa)) are disordered. A compositionally biased stretch (low complexity) spans 80–89 (RPSGPRPSGG). Basic and acidic residues predominate over residues 117–183 (ARVRDLEERR…AKKRFGEGEA (67 aa)). 2 stretches are compositionally biased toward low complexity: residues 184-237 (PRPA…ARPA) and 248-257 (GRAPAAVAAG). The tr-type G domain occupies 417-586 (PRSPVVTVMG…MIALQADILD (170 aa)). The G1 stretch occupies residues 426–433 (GHVDHGKT). Residue 426 to 433 (GHVDHGKT) coordinates GTP. The segment at 451-455 (GITQH) is G2. A G3 region spans residues 474–477 (DTPG). Residues 474–478 (DTPGH) and 528–531 (NKID) each bind GTP. The segment at 528–531 (NKID) is G4. Residues 564–566 (SAK) are G5.

It belongs to the TRAFAC class translation factor GTPase superfamily. Classic translation factor GTPase family. IF-2 subfamily.

It is found in the cytoplasm. One of the essential components for the initiation of protein synthesis. Protects formylmethionyl-tRNA from spontaneous hydrolysis and promotes its binding to the 30S ribosomal subunits. Also involved in the hydrolysis of GTP during the formation of the 70S ribosomal complex. This Bradyrhizobium sp. (strain ORS 278) protein is Translation initiation factor IF-2.